We begin with the raw amino-acid sequence, 112 residues long: Large ribosomal subunit protein P1 (112 aa).

A compositionally biased stretch (low complexity) spans 71 to 90; it reads PAQAAAAAPAGGAPAAAAPA. Residues 71–112 are disordered; it reads PAQAAAAAPAGGAPAAAAPAESKEGRRSQGESDDDMGFGLLD. Positions 91 to 100 are enriched in basic and acidic residues; that stretch reads ESKEGRRSQG.

This sequence belongs to the eukaryotic ribosomal protein P1/P2 family. As to quaternary structure, P1 and P2 exist as dimers at the large ribosomal subunit.

Functionally, plays an important role in the elongation step of protein synthesis. The chain is Large ribosomal subunit protein P1 (rpl-21) from Oscheius tipulae.